A 119-amino-acid polypeptide reads, in one-letter code: Autophagy-related protein 8c (119 aa).

The Phosphatidylethanolamine amidated glycine moiety is linked to residue glycine 117. The propeptide at 118 to 119 is removed in mature form; that stretch reads LV.

Belongs to the ATG8 family. In terms of assembly, interacts with ATG4. Interacts with NBR1. Post-translationally, the C-terminal 2 residues are removed by ATG4 to expose Gly-117 at the C-terminus. This Gly-117 forms then a thioester bond with the 'Cys-558' of ATG7 (E1-like activating enzyme) before being transferred to the 'Cys-258' of ATG3 (the specific E2 conjugating enzyme), in order to be finally amidated with phosphatidylethanolamine. This lipid modification anchors ATG8 to autophagosomes. As to expression, constitutively expressed.

The protein localises to the cytoplasmic vesicle. It is found in the autophagosome membrane. It localises to the vacuole membrane. The protein resides in the cytoplasm. Its subcellular location is the cytoskeleton. Functionally, ubiquitin-like modifier involved in autophagosomes formation. May mediate the delivery of the autophagosomes to the vacuole via the microtubule cytoskeleton. The chain is Autophagy-related protein 8c (ATG8C) from Arabidopsis thaliana (Mouse-ear cress).